The chain runs to 614 residues: RNA polymerase sigma factor RpoD (614 aa).

The tract at residues 168–245 (DPDDNIAAPT…PEEKRSYPQG (78 aa)) is disordered. Acidic residues predominate over residues 193 to 209 (EADDDEEESEGGDDEEE). The segment covering 215–232 (TRSSQPSVSVRYPSSFSD) has biased composition (polar residues). Residues 380–450 (MVEANLRLVI…TRSIADQART (71 aa)) form a sigma-70 factor domain-2 region. The short motif at 404-407 (DLIQ) is the Interaction with polymerase core subunit RpoC element. The segment at 459 to 535 (ETINKLNRIS…DSTMQSPIYV (77 aa)) is sigma-70 factor domain-3. Residues 548-601 (VLSGLTAREAKVLRMRFGIDMNTDHTLEEVGKQFDVTRERIRQIEAKAWRKLRH) are sigma-70 factor domain-4. The segment at residues 574–593 (LEEVGKQFDVTRERIRQIEA) is a DNA-binding region (H-T-H motif).

This sequence belongs to the sigma-70 factor family. RpoD/SigA subfamily. In terms of assembly, interacts transiently with the RNA polymerase catalytic core.

Its subcellular location is the cytoplasm. In terms of biological role, sigma factors are initiation factors that promote the attachment of RNA polymerase to specific initiation sites and are then released. This sigma factor is the primary sigma factor during exponential growth. This Pseudomonas putida (Arthrobacter siderocapsulatus) protein is RNA polymerase sigma factor RpoD.